Reading from the N-terminus, the 734-residue chain is Photosystem I P700 chlorophyll a apoprotein A2 (734 aa).

A run of 8 helical transmembrane segments spans residues 46–69, 135–158, 175–199, 273–291, 330–353, 369–395, 417–439, and 517–535; these read IFASHFGHLAIIFLWTSGNLFHVA, LYFGALGLLVLSTTLLFAGWLHLQ, LNHHLSGLFGVSSLAWSGHLIHVAI, IAHHHLAIAVVFIFAGHMY, LHMQLGLALASLGVATSLVAQHMY, AALYTHHQYIAGFLMVGAFAHGAIFFV, AIISHLSWVSLFLGFHTLGLYIH, and FLVHHAIALGLHTTTLILV. Positions 559 and 568 each coordinate [4Fe-4S] cluster. The next 2 membrane-spanning stretches (helical) occupy residues 575–596 and 643–665; these read AFYLAMFWMLNTISWVTFYWHW and QAVWAWMFLFGHLIWATGFMFLI. H654, M662, and Y670 together coordinate chlorophyll a. Phylloquinone is bound at residue W671. Residues 707 to 727 form a helical membrane-spanning segment; that stretch reads LVGLAHFTVGFIFTFAPFVIA.

The protein belongs to the PsaA/PsaB family. As to quaternary structure, the PsaA/B heterodimer binds the P700 chlorophyll special pair and subsequent electron acceptors. PSI consists of a core antenna complex that captures photons, and an electron transfer chain that converts photonic excitation into a charge separation. The eukaryotic PSI reaction center is composed of at least 11 subunits. P700 is a chlorophyll a/chlorophyll a' dimer, A0 is one or more chlorophyll a, A1 is one or both phylloquinones and FX is a shared 4Fe-4S iron-sulfur center. is required as a cofactor.

The protein resides in the plastid. Its subcellular location is the chloroplast thylakoid membrane. The enzyme catalyses reduced [plastocyanin] + hnu + oxidized [2Fe-2S]-[ferredoxin] = oxidized [plastocyanin] + reduced [2Fe-2S]-[ferredoxin]. In terms of biological role, psaA and PsaB bind P700, the primary electron donor of photosystem I (PSI), as well as the electron acceptors A0, A1 and FX. PSI is a plastocyanin/cytochrome c6-ferredoxin oxidoreductase, converting photonic excitation into a charge separation, which transfers an electron from the donor P700 chlorophyll pair to the spectroscopically characterized acceptors A0, A1, FX, FA and FB in turn. Oxidized P700 is reduced on the lumenal side of the thylakoid membrane by plastocyanin or cytochrome c6. In Emiliania huxleyi (Coccolithophore), this protein is Photosystem I P700 chlorophyll a apoprotein A2.